A 328-amino-acid chain; its full sequence is Reticulocalbin-3 (328 aa).

Positions 1-20 (MMWRWSFLLLLLLLRHWALG) are cleaved as a signal peptide. The segment at 24-48 (PDAGPHGQDRVHHGTPLSEAPHDDA) is disordered. 6 EF-hand domains span residues 77–112 (QARLGRIVDRMDLAGDSDGWVSLAELRAWIAHTQQR), 113–148 (HIRDSVSAAWHTYDTDRDGRVGWEELRNATYGHYEP), 163–198 (KMLARDERRFRVADQDGDSMATREELTAFLHPEEFP), 200–235 (MRDIVVAETLEDLDKNKDGYVQVEEYIADLYSEEPG), 241–276 (WVQTERQQFREFRDLNKDGRLDGSEVGYWVLPPSQD), and 277–312 (QPLVEANHLLHESDTDKDGRLSKAEILSNWNMFVGS). Ca(2+) is bound by residues Asp-92, Asp-94, Trp-96, Glu-101, Asp-126, Asp-128, Asp-130, Arg-132, and Glu-137. A glycan (N-linked (GlcNAc...) asparagine) is linked at Asn-140. Residues Asp-176, Asp-178, Asp-180, Met-182, Glu-187, Asp-213, Asn-215, Asp-217, Tyr-219, Glu-224, Asp-254, Asn-256, Asp-258, Arg-260, Glu-265, Asp-290, Asp-292, Asp-294, Arg-296, and Glu-301 each coordinate Ca(2+). The Prevents secretion from ER motif lies at 325 to 328 (HDEL).

It belongs to the CREC family. In terms of assembly, interacts with PCSK6 (immature form including the propeptide); probably involved in the maturation and the secretion of PCSK6. In terms of processing, degraded by PCSK6 and other endoproteases including FURIN and PCSK5. N-glycosylated. Highly expressed in lung and heart. Also detected in liver, spleen, kidney, skeletal muscle, intestine, stomach, and brain.

It is found in the endoplasmic reticulum lumen. In terms of biological role, probable molecular chaperone assisting protein biosynthesis and transport in the endoplasmic reticulum. Required for the proper biosynthesis and transport of pulmonary surfactant-associated protein A/SP-A, pulmonary surfactant-associated protein D/SP-D and the lipid transporter ABCA3. By regulating both the proper expression and the degradation through the endoplasmic reticulum-associated protein degradation pathway of these proteins plays a crucial role in pulmonary surfactant homeostasis. Has an anti-fibrotic activity by negatively regulating the secretion of type I and type III collagens. This calcium-binding protein also transiently associates with immature PCSK6 and regulates its secretion. The polypeptide is Reticulocalbin-3 (Mus musculus (Mouse)).